We begin with the raw amino-acid sequence, 316 residues long: Acetyl-coenzyme A carboxylase carboxyl transferase subunit alpha (316 aa).

A CoA carboxyltransferase C-terminal domain is found at L40 to E293.

It belongs to the AccA family. As to quaternary structure, acetyl-CoA carboxylase is a heterohexamer composed of biotin carboxyl carrier protein (AccB), biotin carboxylase (AccC) and two subunits each of ACCase subunit alpha (AccA) and ACCase subunit beta (AccD).

The protein resides in the cytoplasm. The enzyme catalyses N(6)-carboxybiotinyl-L-lysyl-[protein] + acetyl-CoA = N(6)-biotinyl-L-lysyl-[protein] + malonyl-CoA. The protein operates within lipid metabolism; malonyl-CoA biosynthesis; malonyl-CoA from acetyl-CoA: step 1/1. Its function is as follows. Component of the acetyl coenzyme A carboxylase (ACC) complex. First, biotin carboxylase catalyzes the carboxylation of biotin on its carrier protein (BCCP) and then the CO(2) group is transferred by the carboxyltransferase to acetyl-CoA to form malonyl-CoA. The polypeptide is Acetyl-coenzyme A carboxylase carboxyl transferase subunit alpha (Mesorhizobium japonicum (strain LMG 29417 / CECT 9101 / MAFF 303099) (Mesorhizobium loti (strain MAFF 303099))).